A 275-amino-acid polypeptide reads, in one-letter code: MAVLNSNPEILLRKRKNNDRKRLEKQEQARQRQLEQKKKNDQRSKKFVRAETLVSNYKSNELENKRIKHITKFEKQSQADKISQAKEDDESAKLLFIIRIPDHTKGLKVPSKARKVLHLLRLNRPNTGVFVKLTPATVPLLKLISPYIVAGKPSLNSIRKLFQKRACISVIDEETKEPRITKLDNNGVVEDKFGDDLGCICIEDLIHELATLGEHFKTVSNWILPFKLNAPVSGWGPQAKLAKLQYSNEHQRKISLAGDAKLNEIDIDQFIDEQN.

Positions 14–45 (KRKNNDRKRLEKQEQARQRQLEQKKKNDQRSK) are disordered. Residues 20 to 44 (RKRLEKQEQARQRQLEQKKKNDQRS) show a composition bias toward basic and acidic residues.

The protein belongs to the universal ribosomal protein uL30 family.

It localises to the nucleus. The protein resides in the nucleolus. Involved in the biogenesis of the 60S ribosomal subunit. May act as a specificity factor that binds precursor rRNAs and tethers the enzymes that carry out the early 5' to 3' exonucleolytic reactions that generate the mature rRNAs. This is Ribosome biogenesis protein RLP7 (RLP7) from Debaryomyces hansenii (strain ATCC 36239 / CBS 767 / BCRC 21394 / JCM 1990 / NBRC 0083 / IGC 2968) (Yeast).